The sequence spans 300 residues: Acetylglutamate kinase (300 aa).

Substrate is bound by residues 68 to 69 (GG), Arg-90, and Asn-195.

Belongs to the acetylglutamate kinase family. ArgB subfamily.

It localises to the cytoplasm. The enzyme catalyses N-acetyl-L-glutamate + ATP = N-acetyl-L-glutamyl 5-phosphate + ADP. Its pathway is amino-acid biosynthesis; L-arginine biosynthesis; N(2)-acetyl-L-ornithine from L-glutamate: step 2/4. Catalyzes the ATP-dependent phosphorylation of N-acetyl-L-glutamate. The protein is Acetylglutamate kinase of Stutzerimonas stutzeri (strain A1501) (Pseudomonas stutzeri).